The sequence spans 336 residues: Thiamine thiazole synthase (336 aa).

Substrate is bound by residues Ala89, 110–111 (ES), Gly118, and Cys183. The residue at position 219 (Cys219) is a 2,3-didehydroalanine (Cys). Residues Asp221, His236, Met288, and 298–300 (RMG) each bind substrate.

The protein belongs to the THI4 family. In terms of assembly, homooctamer. The cofactor is Fe cation. During the catalytic reaction, a sulfide is transferred from Cys-219 to a reaction intermediate, generating a dehydroalanine residue.

It is found in the cytoplasm. The protein resides in the nucleus. The catalysed reaction is [ADP-thiazole synthase]-L-cysteine + glycine + NAD(+) = [ADP-thiazole synthase]-dehydroalanine + ADP-5-ethyl-4-methylthiazole-2-carboxylate + nicotinamide + 3 H2O + 2 H(+). Its function is as follows. Involved in biosynthesis of the thiamine precursor thiazole. Catalyzes the conversion of NAD and glycine to adenosine diphosphate 5-(2-hydroxyethyl)-4-methylthiazole-2-carboxylic acid (ADT), an adenylated thiazole intermediate. The reaction includes an iron-dependent sulfide transfer from a conserved cysteine residue of the protein to a thiazole intermediate. The enzyme can only undergo a single turnover, which suggests it is a suicide enzyme. May have additional roles in adaptation to various stress conditions and in DNA damage tolerance. The polypeptide is Thiamine thiazole synthase (Puccinia graminis f. sp. tritici (strain CRL 75-36-700-3 / race SCCL) (Black stem rust fungus)).